We begin with the raw amino-acid sequence, 150 residues long: Large ribosomal subunit protein bL9 (150 aa).

The protein belongs to the bacterial ribosomal protein bL9 family.

Its function is as follows. Binds to the 23S rRNA. This Shewanella sediminis (strain HAW-EB3) protein is Large ribosomal subunit protein bL9.